The following is a 289-amino-acid chain: 2-dehydro-3-deoxyphosphooctonate aldolase (289 aa).

Belongs to the KdsA family.

The protein localises to the cytoplasm. It carries out the reaction D-arabinose 5-phosphate + phosphoenolpyruvate + H2O = 3-deoxy-alpha-D-manno-2-octulosonate-8-phosphate + phosphate. Its pathway is carbohydrate biosynthesis; 3-deoxy-D-manno-octulosonate biosynthesis; 3-deoxy-D-manno-octulosonate from D-ribulose 5-phosphate: step 2/3. The protein operates within bacterial outer membrane biogenesis; lipopolysaccharide biosynthesis. The chain is 2-dehydro-3-deoxyphosphooctonate aldolase from Cupriavidus taiwanensis (strain DSM 17343 / BCRC 17206 / CCUG 44338 / CIP 107171 / LMG 19424 / R1) (Ralstonia taiwanensis (strain LMG 19424)).